The primary structure comprises 108 residues: MQVLHLCLAVSIAVALLSQAAWSEEVFDDTDVGDELTNALESVLTDFKDKREAEEPSAFMTRLRRQVAQMHVWRAVNHDRNHGTGSGRHGRFLIRNRYRYGGGHLSDA.

A signal peptide spans 1–23 (MQVLHLCLAVSIAVALLSQAAWS). Residues E24 and E52 each carry the pyrrolidone carboxylic acid (Glu); partial modification. A Pyrrolidone carboxylic acid modification is found at Q66.

The partial formation of pyroglutamate from N-terminal glutamic acid in peptides isolated from single cells is detected by mass spectrometry. There are indications this modification depends on a heat sensitive factor. Neurons R3-R14. A cluster of 12 giant neurons located on the right side of the abdominal ganglion.

Its subcellular location is the secreted. Functionally, HRBP is a myoactive peptide that excites Aplysia heart and enhances gut motility in vitro. This Aplysia californica (California sea hare) protein is Abdominal ganglion neuropeptide R3-14.